A 166-amino-acid chain; its full sequence is MSFNFRIGQGYDVHAFGPGDHVMLGGVRVAHSHGVLAHSDGDVVLHALCDAMLGALALGDIGRHFPPSDARWKDADSAQFLQHCDGLLRERGWRVGNADITVICERPKVGPHAVAMRERIADLLAIELDAVSVKATTSEQLGFTGRGEGIAAQAAVLLGRIAAPHQ.

Asp12 and His14 together coordinate a divalent metal cation. 4-CDP-2-C-methyl-D-erythritol 2-phosphate contacts are provided by residues 12 to 14 and 38 to 39; these read DVH and HS. Position 46 (His46) interacts with a divalent metal cation. 4-CDP-2-C-methyl-D-erythritol 2-phosphate is bound by residues 60–62, 136–139, Phe143, and Arg146; these read DIG and TTSE.

It belongs to the IspF family. As to quaternary structure, homotrimer. The cofactor is a divalent metal cation.

It carries out the reaction 4-CDP-2-C-methyl-D-erythritol 2-phosphate = 2-C-methyl-D-erythritol 2,4-cyclic diphosphate + CMP. Its pathway is isoprenoid biosynthesis; isopentenyl diphosphate biosynthesis via DXP pathway; isopentenyl diphosphate from 1-deoxy-D-xylulose 5-phosphate: step 4/6. In terms of biological role, involved in the biosynthesis of isopentenyl diphosphate (IPP) and dimethylallyl diphosphate (DMAPP), two major building blocks of isoprenoid compounds. Catalyzes the conversion of 4-diphosphocytidyl-2-C-methyl-D-erythritol 2-phosphate (CDP-ME2P) to 2-C-methyl-D-erythritol 2,4-cyclodiphosphate (ME-CPP) with a corresponding release of cytidine 5-monophosphate (CMP). The chain is 2-C-methyl-D-erythritol 2,4-cyclodiphosphate synthase from Xanthomonas axonopodis pv. citri (strain 306).